Consider the following 226-residue polypeptide: Ribonuclease 3 (226 aa).

The RNase III domain occupies Ile-5 to Gly-127. Residue Glu-40 participates in Mg(2+) binding. Asp-44 is a catalytic residue. Mg(2+) contacts are provided by Asp-113 and Glu-116. The active site involves Glu-116. Residues Asp-154–Ser-224 enclose the DRBM domain.

The protein belongs to the ribonuclease III family. Homodimer. It depends on Mg(2+) as a cofactor.

It localises to the cytoplasm. The enzyme catalyses Endonucleolytic cleavage to 5'-phosphomonoester.. Functionally, digests double-stranded RNA. Involved in the processing of primary rRNA transcript to yield the immediate precursors to the large and small rRNAs (23S and 16S). Processes some mRNAs, and tRNAs when they are encoded in the rRNA operon. Processes pre-crRNA and tracrRNA of type II CRISPR loci if present in the organism. The sequence is that of Ribonuclease 3 from Xanthomonas oryzae pv. oryzae (strain KACC10331 / KXO85).